We begin with the raw amino-acid sequence, 356 residues long: DNA integrity scanning protein DisA (356 aa).

Residues 11 to 149 (VHTMRDTLQR…EGKSHILEEP (139 aa)) form the DAC domain. ATP-binding positions include G78, L96, and 109–113 (TRHRS).

This sequence belongs to the DisA family. In terms of assembly, homooctamer. The cofactor is Mg(2+).

The catalysed reaction is 2 ATP = 3',3'-c-di-AMP + 2 diphosphate. Functionally, participates in a DNA-damage check-point. DisA forms globular foci that rapidly scan along the chromosomes searching for lesions. Its function is as follows. Also has diadenylate cyclase activity, catalyzing the condensation of 2 ATP molecules into cyclic di-AMP (c-di-AMP). c-di-AMP likely acts as a signaling molecule that may couple DNA integrity with a cellular process. The chain is DNA integrity scanning protein DisA from Corynebacterium efficiens (strain DSM 44549 / YS-314 / AJ 12310 / JCM 11189 / NBRC 100395).